The following is a 331-amino-acid chain: MKIPLITEIQRFSLQDGPGIRTTIFLKGCPLRCPWCHNPETQDARQEFYFYPDRCVGCGRCVAVCPAETSRLVRNSDGRTIVQIDRTNCQRCMRCVAACLTEARAIVGQHMSVDEILREALSDSAFYRNSGGGVTISGGDPLYFPDFTRQLASELHARGVHVAIETSCFPKQGKVVESMIGIVDLFIVDLKTLDAHKHLDVIGWPLAPILANLETLFAAGAKVRIHIPVIPGFNDSHADIDAYAEYLGKHAAAISGIDLLNFHCYGEGKYTFLGRAGSYQYSGVDETPAEKIVPLAQALKARGLAVTIGGIVGIANGKNELTGDIALEVHH.

The region spanning 15 to 315 (QDGPGIRTTI…VTIGGIVGIA (301 aa)) is the Radical SAM core domain. Cys29, Cys33, Cys36, Cys55, Cys58, Cys61, Cys65, Cys89, Cys92, Cys95, and Cys99 together coordinate [4Fe-4S] cluster. 35 to 37 (WCH) lines the S-adenosyl-L-methionine pocket. 4Fe-4S ferredoxin-type domains are found at residues 46–75 (QEFY…LVRN) and 80–109 (TIVQ…IVGQ). S-adenosyl-L-methionine contacts are provided by residues Gly139, 189-191 (DLK), and His263.

The protein belongs to the organic radical-activating enzymes family. [4Fe-4S] cluster serves as cofactor.

It catalyses the reaction glycyl-[protein] + reduced [flavodoxin] + S-adenosyl-L-methionine = glycin-2-yl radical-[protein] + semiquinone [flavodoxin] + 5'-deoxyadenosine + L-methionine + H(+). Its pathway is xenobiotic degradation; toluene degradation [regulation]. Its function is as follows. Activation of benzylsuccinate synthase under anaerobic conditions by generation of an organic free radical, using S-adenosylmethionine and reduced flavodoxin as cosubstrates to produce 5'-deoxy-adenosine. The polypeptide is Benzylsuccinate synthase activating enzyme (bssD) (Thauera aromatica).